A 296-amino-acid chain; its full sequence is Ribonuclease HIII (296 aa).

The RNase H type-2 domain maps to 80-296 (LALIGSDEVG…NTKKAYQRLK (217 aa)). Asp86, Glu87, and Asp191 together coordinate a divalent metal cation.

It belongs to the RNase HII family. RnhC subfamily. It depends on Mn(2+) as a cofactor. Mg(2+) is required as a cofactor.

The protein resides in the cytoplasm. It catalyses the reaction Endonucleolytic cleavage to 5'-phosphomonoester.. In terms of biological role, endonuclease that specifically degrades the RNA of RNA-DNA hybrids. The protein is Ribonuclease HIII of Streptococcus thermophilus (strain ATCC BAA-491 / LMD-9).